A 362-amino-acid polypeptide reads, in one-letter code: UDP-N-acetylglucosamine--N-acetylmuramyl-(pentapeptide) pyrophosphoryl-undecaprenol N-acetylglucosamine transferase (362 aa).

Residues 15–17 (TGG), Asn127, Arg165, Ser191, Ile247, 266–271 (ALTVSE), and Gln292 each bind UDP-N-acetyl-alpha-D-glucosamine.

It belongs to the glycosyltransferase 28 family. MurG subfamily.

It localises to the cell inner membrane. The enzyme catalyses di-trans,octa-cis-undecaprenyl diphospho-N-acetyl-alpha-D-muramoyl-L-alanyl-D-glutamyl-meso-2,6-diaminopimeloyl-D-alanyl-D-alanine + UDP-N-acetyl-alpha-D-glucosamine = di-trans,octa-cis-undecaprenyl diphospho-[N-acetyl-alpha-D-glucosaminyl-(1-&gt;4)]-N-acetyl-alpha-D-muramoyl-L-alanyl-D-glutamyl-meso-2,6-diaminopimeloyl-D-alanyl-D-alanine + UDP + H(+). It participates in cell wall biogenesis; peptidoglycan biosynthesis. Cell wall formation. Catalyzes the transfer of a GlcNAc subunit on undecaprenyl-pyrophosphoryl-MurNAc-pentapeptide (lipid intermediate I) to form undecaprenyl-pyrophosphoryl-MurNAc-(pentapeptide)GlcNAc (lipid intermediate II). The protein is UDP-N-acetylglucosamine--N-acetylmuramyl-(pentapeptide) pyrophosphoryl-undecaprenol N-acetylglucosamine transferase of Shewanella baltica (strain OS223).